Consider the following 261-residue polypeptide: Adenosylcobinamide-GDP ribazoletransferase (261 aa).

5 helical membrane passes run 31–51 (YAIC…FLTF), 59–79 (LGDI…SGGI), 125–145 (FGMV…FFVV), 183–203 (VIYL…LTVV), and 240–260 (LMAG…TGHW).

The protein belongs to the CobS family. It depends on Mg(2+) as a cofactor.

It localises to the cell membrane. The enzyme catalyses alpha-ribazole + adenosylcob(III)inamide-GDP = adenosylcob(III)alamin + GMP + H(+). It carries out the reaction alpha-ribazole 5'-phosphate + adenosylcob(III)inamide-GDP = adenosylcob(III)alamin 5'-phosphate + GMP + H(+). The protein operates within cofactor biosynthesis; adenosylcobalamin biosynthesis; adenosylcobalamin from cob(II)yrinate a,c-diamide: step 7/7. Joins adenosylcobinamide-GDP and alpha-ribazole to generate adenosylcobalamin (Ado-cobalamin). Also synthesizes adenosylcobalamin 5'-phosphate from adenosylcobinamide-GDP and alpha-ribazole 5'-phosphate. This chain is Adenosylcobinamide-GDP ribazoletransferase, found in Lachnoclostridium phytofermentans (strain ATCC 700394 / DSM 18823 / ISDg) (Clostridium phytofermentans).